A 215-amino-acid polypeptide reads, in one-letter code: ATP phosphoribosyltransferase (215 aa).

Belongs to the ATP phosphoribosyltransferase family. Short subfamily. In terms of assembly, heteromultimer composed of HisG and HisZ subunits.

It is found in the cytoplasm. It carries out the reaction 1-(5-phospho-beta-D-ribosyl)-ATP + diphosphate = 5-phospho-alpha-D-ribose 1-diphosphate + ATP. Its pathway is amino-acid biosynthesis; L-histidine biosynthesis; L-histidine from 5-phospho-alpha-D-ribose 1-diphosphate: step 1/9. In terms of biological role, catalyzes the condensation of ATP and 5-phosphoribose 1-diphosphate to form N'-(5'-phosphoribosyl)-ATP (PR-ATP). Has a crucial role in the pathway because the rate of histidine biosynthesis seems to be controlled primarily by regulation of HisG enzymatic activity. This is ATP phosphoribosyltransferase from Lachnoclostridium phytofermentans (strain ATCC 700394 / DSM 18823 / ISDg) (Clostridium phytofermentans).